The sequence spans 402 residues: Formate-dependent phosphoribosylglycinamide formyltransferase (402 aa).

Residues E22–L23 and E82 contribute to the N(1)-(5-phospho-beta-D-ribosyl)glycinamide site. Residues R115, K160, S165 to Q170, E200 to V203, and E208 contribute to the ATP site. The 199-residue stretch at R120 to L318 folds into the ATP-grasp domain. Mg(2+) contacts are provided by E277 and E289. N(1)-(5-phospho-beta-D-ribosyl)glycinamide is bound by residues D296, K365, and R372–R373.

This sequence belongs to the PurK/PurT family. In terms of assembly, homodimer.

The catalysed reaction is N(1)-(5-phospho-beta-D-ribosyl)glycinamide + formate + ATP = N(2)-formyl-N(1)-(5-phospho-beta-D-ribosyl)glycinamide + ADP + phosphate + H(+). Its pathway is purine metabolism; IMP biosynthesis via de novo pathway; N(2)-formyl-N(1)-(5-phospho-D-ribosyl)glycinamide from N(1)-(5-phospho-D-ribosyl)glycinamide (formate route): step 1/1. In terms of biological role, involved in the de novo purine biosynthesis. Catalyzes the transfer of formate to 5-phospho-ribosyl-glycinamide (GAR), producing 5-phospho-ribosyl-N-formylglycinamide (FGAR). Formate is provided by PurU via hydrolysis of 10-formyl-tetrahydrofolate. The sequence is that of Formate-dependent phosphoribosylglycinamide formyltransferase from Mycobacteroides abscessus (strain ATCC 19977 / DSM 44196 / CCUG 20993 / CIP 104536 / JCM 13569 / NCTC 13031 / TMC 1543 / L948) (Mycobacterium abscessus).